The sequence spans 268 residues: Ribosomal RNA small subunit methyltransferase A (268 aa).

The S-adenosyl-L-methionine site is built by Asn-21, Leu-23, Gly-48, Glu-69, Asp-94, and Asn-115.

The protein belongs to the class I-like SAM-binding methyltransferase superfamily. rRNA adenine N(6)-methyltransferase family. RsmA subfamily.

It localises to the cytoplasm. The catalysed reaction is adenosine(1518)/adenosine(1519) in 16S rRNA + 4 S-adenosyl-L-methionine = N(6)-dimethyladenosine(1518)/N(6)-dimethyladenosine(1519) in 16S rRNA + 4 S-adenosyl-L-homocysteine + 4 H(+). Functionally, specifically dimethylates two adjacent adenosines (A1518 and A1519) in the loop of a conserved hairpin near the 3'-end of 16S rRNA in the 30S particle. May play a critical role in biogenesis of 30S subunits. The protein is Ribosomal RNA small subunit methyltransferase A of Saccharophagus degradans (strain 2-40 / ATCC 43961 / DSM 17024).